The chain runs to 180 residues: Signal peptidase complex subunit 3 (180 aa).

Over 1–12 (MHNLLSRANALL) the chain is Cytoplasmic. The chain crosses the membrane as a helical; Signal-anchor for type II membrane protein span at residues 13–33 (AFTLWVMAAVTAACFLSTVFL). Over 34 to 180 (DYTVPTKLTV…PTTYTTTRRS (147 aa)) the chain is Lumenal. The N-linked (GlcNAc...) asparagine glycan is linked to Asn-141.

It belongs to the SPCS3 family. In terms of assembly, component of the signal peptidase complex (SPC) composed of a catalytic subunit sec-11 and three accessory subunits spcs-1, spcs-2 and spcs-3. The complex induces a local thinning of the ER membrane which is used to measure the length of the signal peptide (SP) h-region of protein substrates. This ensures the selectivity of the complex towards h-regions shorter than 18-20 amino acids.

It localises to the endoplasmic reticulum membrane. Essential component of the signal peptidase complex (SPC) which catalyzes the cleavage of N-terminal signal sequences from nascent proteins as they are translocated into the lumen of the endoplasmic reticulum. Essential for the SPC catalytic activity, possibly by stabilizing and positioning the active center of the complex close to the lumenal surface. This is Signal peptidase complex subunit 3 from Caenorhabditis elegans.